We begin with the raw amino-acid sequence, 183 residues long: UPF0134 protein MPN_100 (183 aa).

The protein belongs to the UPF0134 family.

This chain is UPF0134 protein MPN_100, found in Mycoplasma pneumoniae (strain ATCC 29342 / M129 / Subtype 1) (Mycoplasmoides pneumoniae).